Here is a 440-residue protein sequence, read N- to C-terminus: Trigger factor (440 aa).

One can recognise a PPIase FKBP-type domain in the interval 163 to 248 (GDTVNIDFDG…INEIKYKNVP (86 aa)).

Belongs to the FKBP-type PPIase family. Tig subfamily.

The protein localises to the cytoplasm. The enzyme catalyses [protein]-peptidylproline (omega=180) = [protein]-peptidylproline (omega=0). Its function is as follows. Involved in protein export. Acts as a chaperone by maintaining the newly synthesized protein in an open conformation. Functions as a peptidyl-prolyl cis-trans isomerase. The protein is Trigger factor of Staphylococcus carnosus (strain TM300).